The sequence spans 198 residues: Ribosomal RNA small subunit methyltransferase G (198 aa).

Residues Gly-74, Phe-79, 123 to 124 (IQ), and Arg-136 contribute to the S-adenosyl-L-methionine site.

Belongs to the methyltransferase superfamily. RNA methyltransferase RsmG family.

Its subcellular location is the cytoplasm. It catalyses the reaction guanosine(527) in 16S rRNA + S-adenosyl-L-methionine = N(7)-methylguanosine(527) in 16S rRNA + S-adenosyl-L-homocysteine. In terms of biological role, specifically methylates the N7 position of guanine in position 527 of 16S rRNA. This Orientia tsutsugamushi (strain Boryong) (Rickettsia tsutsugamushi) protein is Ribosomal RNA small subunit methyltransferase G.